The sequence spans 540 residues: Zinc transporter ZIP5 (540 aa).

An N-terminal signal peptide occupies residues 1–20 (MMGSPVSHLLAGFCVWVVLG). Residues 21-212 (WVGGSVPNLG…PAPPGDLLSA (192 aa)) are Extracellular-facing. Asn50 is a glycosylation site (N-linked (GlcNAc...) asparagine). The interval 78–101 (HGPLTGRAASPAADNSTHRPQNPE) is disordered. Residues 90–101 (ADNSTHRPQNPE) show a composition bias toward polar residues. Residue Asn160 is glycosylated (N-linked (GlcNAc...) asparagine). Residues 213-233 (LLQSALAVLLLSLPSPLSLLL) form a helical membrane-spanning segment. Residues 234–244 (LRLLGPRLLRP) lie on the Cytoplasmic side of the membrane. Residues 245-265 (LLGFLGALAVGTLCGDALLHL) traverse the membrane as a helical segment. Residues 266–287 (LPHAQEGRHAGPGGLPEKDLGP) lie on the Extracellular side of the membrane. A helical membrane pass occupies residues 288 to 308 (GLSVLGGLFLLFVLENMLGLL). Residues 309 to 444 (RHRGLRPRCC…LLQSGLSFRR (136 aa)) are Cytoplasmic-facing. The segment at 324 to 377 (NLETRNLDPENGSGMALQPLQAAPEPGAQGQREKNSQHPPALAPPGHQGHSHGH) is disordered. A Phosphoserine modification is found at Ser336. His375 carries the post-translational modification Pros-methylhistidine. Residues 445-465 (LLLLSLVSGALGLGGAVLGVG) traverse the membrane as a helical segment. At 466 to 470 (LSLGP) the chain is on the extracellular side. A helical transmembrane segment spans residues 471-491 (VPLTPWVFGVTAGVFLYVALV). The Cytoplasmic segment spans residues 492–508 (DMLPALLRPPEPLPTPH). The helical transmembrane segment at 509 to 529 (VLLQGLGLLLGGGLMLAITLL) threads the bilayer. The Extracellular segment spans residues 530 to 540 (EERLLPVTTEG).

The protein belongs to the ZIP transporter (TC 2.A.5) family. As to quaternary structure, homodimer. Methylated at His-375 by METTL9. In terms of processing, N-Glycosylated. In terms of tissue distribution, expressed in liver, kidney, pancreas, small intestine, colon, spleen, fetal liver and fetal kidney.

Its subcellular location is the basolateral cell membrane. The catalysed reaction is Zn(2+)(in) = Zn(2+)(out). Its function is as follows. Uniporter that transports zinc(2+) into polarized cells of enterocytes, pancreatic acinar and endoderm cells across the basolateral membrane and participates, notably, in zinc excretion from the intestine by the uptake of zinc from the blood into the intestine. The transport mechanism is temperature- and concentration-dependent and saturable. In addition, is also a high affinity copper transporter in vitro. Also may regulate glucose-stimulated insulin secretion (GSIS) in islets primarily through the zinc-activated SIRT1-PPARGC1A axis. Could regulate the BMP/TGF-beta (bone morphogenetic protein/transforming growth factor-beta) signaling pathway and modulates extracellular matrix (ECM) proteins of the sclera. Plays a role in eye development. In Homo sapiens (Human), this protein is Zinc transporter ZIP5.